Consider the following 241-residue polypeptide: Fatty acid metabolism regulator protein (241 aa).

An HTH gntR-type domain is found at 11–79; sequence QSPAGLAEEY…HGKPTKVNNI (69 aa). The segment at residues 39-58 is a DNA-binding region (H-T-H motif); that stretch reads ERELAEKIGVTRTTLREVLQ.

In terms of assembly, homodimer.

Its subcellular location is the cytoplasm. Functionally, multifunctional regulator of fatty acid metabolism. The sequence is that of Fatty acid metabolism regulator protein from Pasteurella multocida (strain Pm70).